A 164-amino-acid polypeptide reads, in one-letter code: Cyclic pyranopterin monophosphate synthase (164 aa).

Substrate is bound by residues 75 to 77 (MCH) and 116 to 117 (ME). Residue Asp131 is part of the active site.

This sequence belongs to the MoaC family. Homohexamer; trimer of dimers.

It catalyses the reaction (8S)-3',8-cyclo-7,8-dihydroguanosine 5'-triphosphate = cyclic pyranopterin phosphate + diphosphate. Its pathway is cofactor biosynthesis; molybdopterin biosynthesis. Functionally, catalyzes the conversion of (8S)-3',8-cyclo-7,8-dihydroguanosine 5'-triphosphate to cyclic pyranopterin monophosphate (cPMP). The chain is Cyclic pyranopterin monophosphate synthase from Staphylococcus aureus (strain MRSA252).